The primary structure comprises 744 residues: Photosystem I P700 chlorophyll a apoprotein A2 (744 aa).

8 helical membrane-spanning segments follow: residues 48 to 71 (LFAT…FHIA), 137 to 160 (LYAG…LHLQ), 177 to 201 (LNHH…HVAI), 275 to 293 (MAHH…GHMY), 337 to 360 (LHFQ…QHMY), 376 to 402 (AALY…IFLV), 424 to 446 (AIIS…LYVH), and 527 to 545 (FLVH…LILV). 2 residues coordinate [4Fe-4S] cluster: Cys569 and Cys578. 2 consecutive transmembrane segments (helical) span residues 585–606 (AFYL…YWHW) and 653–675 (LAVW…MFLI). Residues His664, Met672, and Tyr680 each coordinate chlorophyll a. Trp681 is a binding site for phylloquinone. A helical transmembrane segment spans residues 717–737 (LVGLAHFTVGYVLTYAAFVIA).

It belongs to the PsaA/PsaB family. In terms of assembly, the PsaA/B heterodimer binds the P700 chlorophyll special pair and subsequent electron acceptors. PSI consists of a core antenna complex that captures photons, and an electron transfer chain that converts photonic excitation into a charge separation. The cyanobacterial PSI reaction center is composed of one copy each of PsaA,B,C,D,E,F,I,J,K,L,M and X, and forms trimeric complexes. PSI electron transfer chain: 5 chlorophyll a, 1 chlorophyll a', 2 phylloquinones and 3 4Fe-4S clusters. PSI core antenna: 90 chlorophyll a, 22 carotenoids, 3 phospholipids and 1 galactolipid. P700 is a chlorophyll a/chlorophyll a' dimer, A0 is one or more chlorophyll a, A1 is one or both phylloquinones and FX is a shared 4Fe-4S iron-sulfur center. serves as cofactor.

It is found in the cellular thylakoid membrane. It carries out the reaction reduced [plastocyanin] + hnu + oxidized [2Fe-2S]-[ferredoxin] = oxidized [plastocyanin] + reduced [2Fe-2S]-[ferredoxin]. Functionally, psaA and PsaB bind P700, the primary electron donor of photosystem I (PSI), as well as the electron acceptors A0, A1 and FX. PSI is a plastocyanin/cytochrome c6-ferredoxin oxidoreductase, converting photonic excitation into a charge separation, which transfers an electron from the donor P700 chlorophyll pair to the spectroscopically characterized acceptors A0, A1, FX, FA and FB in turn. Oxidized P700 is reduced on the lumenal side of the thylakoid membrane by plastocyanin or cytochrome c6. The chain is Photosystem I P700 chlorophyll a apoprotein A2 from Synechococcus sp. (strain JA-2-3B'a(2-13)) (Cyanobacteria bacterium Yellowstone B-Prime).